The primary structure comprises 306 residues: Homoserine kinase (306 aa).

Residue 90–100 (PLARGLGSSAS) participates in ATP binding.

This sequence belongs to the GHMP kinase family. Homoserine kinase subfamily.

Its subcellular location is the cytoplasm. It carries out the reaction L-homoserine + ATP = O-phospho-L-homoserine + ADP + H(+). Its pathway is amino-acid biosynthesis; L-threonine biosynthesis; L-threonine from L-aspartate: step 4/5. Its function is as follows. Catalyzes the ATP-dependent phosphorylation of L-homoserine to L-homoserine phosphate. The polypeptide is Homoserine kinase (Staphylococcus epidermidis (strain ATCC 35984 / DSM 28319 / BCRC 17069 / CCUG 31568 / BM 3577 / RP62A)).